A 536-amino-acid polypeptide reads, in one-letter code: Transcriptional regulator RPN4 (536 aa).

Composition is skewed to low complexity over residues 154-181 and 361-370; these read QEQQ…QQQQ and SPSAISPASP. Disordered stretches follow at residues 154-196, 353-375, and 393-434; these read QEQQ…TRRR, VFDQ…SDDM, and EEIN…AEIT. Residues 393-411 are compositionally biased toward basic and acidic residues; that stretch reads EEINKKHSKSGKKESKSQK. The C2H2-type zinc-finger motif lies at 440–471; sequence HQCNLINPSTGEPCNKQFSRPYDLIRHQDTIH.

It is found in the nucleus. Transcriptional activator of a number of genes encoding proteasomal subunits. Binds to the DNA sequence 5'-GAAGGCAAAA-3', enriched in regions upstream of proteasome genes. This is Transcriptional regulator RPN4 (RPN4) from Candida albicans (strain SC5314 / ATCC MYA-2876) (Yeast).